Reading from the N-terminus, the 821-residue chain is Fibroblast growth factor receptor 2 (821 aa).

Positions 1–21 are cleaved as a signal peptide; the sequence is MVSWGRFICLVVVTMATLSLA. Residues 22 to 377 are Extracellular-facing; the sequence is RPSFSLVEDT…EITASPDYLE (356 aa). The Ig-like C2-type 1 domain occupies 25–125; it reads FSLVEDTTLE…ETWYFMVNVT (101 aa). C62 and C107 form a disulfide bridge. 2 N-linked (GlcNAc...) asparagine glycosylation sites follow: N83 and N123. The segment covering 131–144 has biased composition (acidic residues); sequence GDDEDDTDGAEDFV. The disordered stretch occupies residues 131 to 151; the sequence is GDDEDDTDGAEDFVSENSNNK. 2 Ig-like C2-type domains span residues 154–247 and 256–358; these read PYWT…YHLD and PILQ…AWLT. The tract at residues 161-178 is heparin-binding; that stretch reads KMEKRLHAVPAANTVKFR. C179 and C231 are joined by a disulfide. N228, N241, N265, N297, N318, and N331 each carry an N-linked (GlcNAc...) asparagine glycan. A disulfide bridge connects residues C278 and C342. The helical transmembrane segment at 378–398 threads the bilayer; that stretch reads IAIYCIGVFLIACMVVTVILC. Residues 399–821 lie on the Cytoplasmic side of the membrane; it reads RMKNTTKKPD…YPHINGSVKT (423 aa). At Y466 the chain carries Phosphotyrosine; by autocatalysis. Residues 481-770 enclose the Protein kinase domain; that stretch reads LTLGKPLGEG…LTLTTNEEYL (290 aa). ATP-binding positions include 487–495, K517, 565–567, and N571; these read LGEGCFGQV and EYA. Phosphotyrosine; by autocatalysis occurs at positions 586 and 588. The Proton acceptor role is filled by D626. A phosphotyrosine; by autocatalysis mark is found at Y656, Y657, and Y769. S780 is subject to Phosphoserine.

The protein belongs to the protein kinase superfamily. Tyr protein kinase family. Fibroblast growth factor receptor subfamily. In terms of assembly, monomer. Homodimer after ligand binding. Interacts predominantly with FGF1 and FGF2, but can also interact with FGF3, FGF4, FGF6, FGF7, FGF8, FGF9, FGF10, FGF17, FGF18 and FGF22 (in vitro). Ligand specificity is determined by tissue-specific expression of isoforms, and differences in the third Ig-like domain are crucial for ligand specificity. Isoform 1 has high affinity for FGF1 and FGF2, but low affinity for FGF7. Isoform 3 has high affinity for FGF1 and FGF7, and has much higher affinity for FGF7 than isoform 1 (in vitro). Affinity for fibroblast growth factors (FGFs) is increased by heparan sulfate glycosaminoglycans that function as coreceptors. Likewise, KLB increases the affinity for FGF19 and FGF21. Interacts with PLCG1, GRB2 and PAK4. Interacts with FLRT2. Post-translationally, autophosphorylated. Binding of FGF family members together with heparan sulfate proteoglycan or heparin promotes receptor dimerization and autophosphorylation on several tyrosine residues. Autophosphorylation occurs in trans between the two FGFR molecules present in the dimer. Phosphorylation at Tyr-769 is essential for interaction with PLCG1. N-glycosylated in the endoplasmic reticulum. The N-glycan chains undergo further maturation to an Endo H-resistant form in the Golgi apparatus. In terms of processing, ubiquitinated. FGFR2 is rapidly ubiquitinated after autophosphorylation, leading to internalization and degradation. Subject to degradation both in lysosomes and by the proteasome.

Its subcellular location is the cell membrane. The protein resides in the golgi apparatus. It is found in the cytoplasmic vesicle. It localises to the secreted. It carries out the reaction L-tyrosyl-[protein] + ATP = O-phospho-L-tyrosyl-[protein] + ADP + H(+). With respect to regulation, present in an inactive conformation in the absence of bound ligand. Ligand binding leads to dimerization and activation by autophosphorylation on tyrosine residues. Inhibited by ARQ 523 and ARQ 069; these compounds maintain the kinase in an inactive conformation and inhibit autophosphorylation. Functionally, tyrosine-protein kinase that acts as a cell-surface receptor for fibroblast growth factors and plays an essential role in the regulation of cell proliferation, differentiation, migration and apoptosis, and in the regulation of embryonic development. Required for normal embryonic patterning, trophoblast function, limb bud development, lung morphogenesis, osteogenesis and skin development. Plays an essential role in the regulation of osteoblast differentiation, proliferation and apoptosis, and is required for normal skeleton development. Promotes cell proliferation in keratinocytes and immature osteoblasts, but promotes apoptosis in differentiated osteoblasts. Phosphorylates PLCG1, FRS2 and PAK4. Ligand binding leads to the activation of several signaling cascades. Activation of PLCG1 leads to the production of the cellular signaling molecules diacylglycerol and inositol 1,4,5-trisphosphate. Phosphorylation of FRS2 triggers recruitment of GRB2, GAB1, PIK3R1 and SOS1, and mediates activation of RAS, MAPK1/ERK2, MAPK3/ERK1 and the MAP kinase signaling pathway, as well as of the AKT1 signaling pathway. FGFR2 signaling is down-regulated by ubiquitination, internalization and degradation. Mutations that lead to constitutive kinase activation or impair normal FGFR2 maturation, internalization and degradation lead to aberrant signaling. Over-expressed FGFR2 promotes activation of STAT1. This chain is Fibroblast growth factor receptor 2 (FGFR2), found in Homo sapiens (Human).